The sequence spans 469 residues: Adenosylhomocysteinase (469 aa).

Positions 63, 139, and 164 each coordinate substrate. 165 to 167 (TTT) is an NAD(+) binding site. Substrate contacts are provided by Lys194 and Asp198. Residues Asn199, 228 to 233 (GYGDVG), Glu251, Asn300, 321 to 323 (IGH), and Asn375 contribute to the NAD(+) site.

It belongs to the adenosylhomocysteinase family. NAD(+) serves as cofactor.

It localises to the cytoplasm. It carries out the reaction S-adenosyl-L-homocysteine + H2O = L-homocysteine + adenosine. It functions in the pathway amino-acid biosynthesis; L-homocysteine biosynthesis; L-homocysteine from S-adenosyl-L-homocysteine: step 1/1. May play a key role in the regulation of the intracellular concentration of adenosylhomocysteine. In Pseudomonas aeruginosa (strain UCBPP-PA14), this protein is Adenosylhomocysteinase.